Consider the following 130-residue polypeptide: MARVTVEDCIDKVDNRFDLVLLAAHRARMISSGSQLTIDRDNDKNPVVSLREIAEQTISPEDMREELVHSLQKFVEVDEPEPDTVPLIGSAGASVDADDTEVAVERMTEEELLKGLEGLAPREEQPEEDE.

Disordered regions lie at residues Pro80 to Asp99 and Glu110 to Glu130. The span at Glu110–Glu124 shows a compositional bias: basic and acidic residues.

The protein belongs to the RNA polymerase subunit omega family. The RNAP catalytic core consists of 2 alpha, 1 beta, 1 beta' and 1 omega subunit. When a sigma factor is associated with the core the holoenzyme is formed, which can initiate transcription.

It carries out the reaction RNA(n) + a ribonucleoside 5'-triphosphate = RNA(n+1) + diphosphate. Functionally, promotes RNA polymerase assembly. Latches the N- and C-terminal regions of the beta' subunit thereby facilitating its interaction with the beta and alpha subunits. This Nitrobacter hamburgensis (strain DSM 10229 / NCIMB 13809 / X14) protein is DNA-directed RNA polymerase subunit omega.